A 243-amino-acid chain; its full sequence is Adenylate dimethylallyltransferase (243 aa).

It catalyses the reaction dimethylallyl diphosphate + AMP = N(6)-(dimethylallyl)adenosine 5'-phosphate + diphosphate. Functionally, transfers dimethylallyl groups to AMP as part of the biosynthesis of cytokinin phytohormones. This Agrobacterium tumefaciens (strain T37) protein is Adenylate dimethylallyltransferase (tzs).